Here is a 442-residue protein sequence, read N- to C-terminus: Yes-associated protein homolog 1 (442 aa).

Positions 1 to 10 (MASKSIHKKH) are enriched in basic residues. The interval 1–84 (MASKSIHKKH…GSVDESSRTA (84 aa)) is disordered. Polar residues-rich tracts occupy residues 13–22 (NSQQDKNQFS) and 55–71 (LPSS…SSAH). Position 104 is a phosphoserine (Ser104). The span at 108–120 (LHTSVNNGQSSAT) shows a compositional bias: polar residues. The interval 108–136 (LHTSVNNGQSSATVPHPSHHNVHHQHSKS) is disordered. A compositionally biased stretch (basic residues) spans 124-134 (PSHHNVHHQHS). The 34-residue stretch at 203 to 236 (LPMPQGWEMCYDSDGVRYFKDHNSKTTTWDDPRL) folds into the WW domain.

The protein belongs to the YAP1 family. Highly divergent. In terms of assembly, interacts (via WW domain) with wts-1 (via N-terminus). Interacts (via WW domain) with egl-44; the interaction may regulate transcription. As to expression, expressed in epithelia, hypodermis, muscles, pharynx, intestine, gonadal sheath cells, vulva, spermatheca and in excretory tissue.

The protein localises to the cytoplasm. Its subcellular location is the nucleus. It localises to the cell projection. It is found in the cilium. The protein resides in the cytoskeleton. The protein localises to the cilium axoneme. Functionally, plays a role in thermal stress response and in aging. The chain is Yes-associated protein homolog 1 from Caenorhabditis elegans.